A 372-amino-acid polypeptide reads, in one-letter code: Alanine dehydrogenase 2 (372 aa).

The active site involves histidine 95. An NAD(+)-binding site is contributed by 169 to 199 (KVTIIGGGQAGTNAAKIALGLGADVTILDVN).

Belongs to the AlaDH/PNT family.

The catalysed reaction is L-alanine + NAD(+) + H2O = pyruvate + NH4(+) + NADH + H(+). The protein operates within amino-acid degradation; L-alanine degradation via dehydrogenase pathway; NH(3) and pyruvate from L-alanine: step 1/1. In terms of biological role, may play a role in cell wall synthesis as L-alanine is an important constituent of the peptidoglycan layer. The chain is Alanine dehydrogenase 2 (ald2) from Staphylococcus aureus (strain Mu50 / ATCC 700699).